Reading from the N-terminus, the 237-residue chain is Protein-S-isoprenylcysteine O-methyltransferase (237 aa).

A run of 4 helical transmembrane segments spans residues 26–46 (SSAI…LFIF), 53–73 (FGIY…WVTM), 92–112 (FNMA…FFPS), and 116–136 (FSLW…RSVA). Residues glutamine 149, 156-159 (HVLV), tyrosine 164, and 169-172 (HPSY) contribute to the S-adenosyl-L-methionine site. Residues 184–204 (VILMNPISIIGFGWASWSFFS) traverse the membrane as a helical segment. Substrate is bound at residue arginine 206. Glutamate 210 contacts S-adenosyl-L-methionine.

It belongs to the class VI-like SAM-binding methyltransferase superfamily. Isoprenylcysteine carboxyl methyltransferase family.

It localises to the endoplasmic reticulum membrane. The enzyme catalyses [protein]-C-terminal S-[(2E,6E)-farnesyl]-L-cysteine + S-adenosyl-L-methionine = [protein]-C-terminal S-[(2E,6E)-farnesyl]-L-cysteine methyl ester + S-adenosyl-L-homocysteine. In terms of biological role, methylates the C-terminal cysteine residues of small GTPases and the heterotrimeric G protein gamma subunit in response to cAMP. The methylation is required for intercellular signaling and regulation of cAMP waves propagation. It also seems to induce the activity of car1, a G protein-coupled receptor which senses extracellular cAMP during the aggregation phase of development. The polypeptide is Protein-S-isoprenylcysteine O-methyltransferase (icmt-1) (Dictyostelium discoideum (Social amoeba)).